Consider the following 604-residue polypeptide: Serine/threonine-protein kinase A-Raf (604 aa).

The RBD domain maps to 19–91 (GTVKVYLPNK…DGEELIVEVL (73 aa)). A Phorbol-ester/DAG-type zinc finger spans residues 98–144 (MHNFVRKTFFSLAFCDFCLKFLFHGFRCQTCGYKFHQHCSSKVPTVC). Zn(2+) is bound by residues histidine 99, cysteine 112, cysteine 115, cysteine 125, cysteine 128, histidine 133, cysteine 136, and cysteine 144. Phosphoserine occurs at positions 157 and 162. 2 disordered regions span residues 177–222 (NELL…HMVS) and 241–288 (TDAA…EKKK). A Phosphothreonine modification is found at threonine 181. Serine 186 is modified (phosphoserine). Positions 210 to 222 (IRSTSTPNVHMVS) are enriched in polar residues. Over residues 252–265 (PRGSPSPASVSSGR) the composition is skewed to low complexity. Phosphoserine occurs at positions 255 and 267. Residues 272–287 (LPSEQRERKSLADEKK) show a composition bias toward basic and acidic residues. The region spanning 308-568 (VQLLKRIGTG…PQILATIELL (261 aa)) is the Protein kinase domain. Residues 314-322 (IGTGSFGTV) and lysine 334 each bind ATP. Threonine 316 carries the phosphothreonine modification. The Proton acceptor role is filled by aspartate 427.

The protein belongs to the protein kinase superfamily. TKL Ser/Thr protein kinase family. RAF subfamily. Interacts with TH1L/NELFD. Zn(2+) is required as a cofactor. Dephosphorylation by the SHOC2-MRAS-PP1c (SMP) complex consisting of SHOC2, GTP-bound M-Ras/MRAS and the catalytic subunit of protein phosphatase 1 (PPP1CA, PPP1CB or PPP1CC); this relieves inactivation and stimulates kinase activity.

It carries out the reaction L-seryl-[protein] + ATP = O-phospho-L-seryl-[protein] + ADP + H(+). It catalyses the reaction L-threonyl-[protein] + ATP = O-phospho-L-threonyl-[protein] + ADP + H(+). Its function is as follows. Involved in the transduction of mitogenic signals from the cell membrane to the nucleus. May also regulate the TOR signaling cascade. Phosphorylates PFKFB2. This Mus musculus (Mouse) protein is Serine/threonine-protein kinase A-Raf (Araf).